Here is a 486-residue protein sequence, read N- to C-terminus: Glutamyl-tRNA(Gln) amidotransferase subunit A (486 aa).

Residues Lys77 and Ser152 each act as charge relay system in the active site. Ser176 acts as the Acyl-ester intermediate in catalysis.

The protein belongs to the amidase family. GatA subfamily. As to quaternary structure, heterotrimer of A, B and C subunits.

The catalysed reaction is L-glutamyl-tRNA(Gln) + L-glutamine + ATP + H2O = L-glutaminyl-tRNA(Gln) + L-glutamate + ADP + phosphate + H(+). Functionally, allows the formation of correctly charged Gln-tRNA(Gln) through the transamidation of misacylated Glu-tRNA(Gln) in organisms which lack glutaminyl-tRNA synthetase. The reaction takes place in the presence of glutamine and ATP through an activated gamma-phospho-Glu-tRNA(Gln). This Lactococcus lactis subsp. cremoris (strain SK11) protein is Glutamyl-tRNA(Gln) amidotransferase subunit A.